The following is a 163-amino-acid chain: Neurotrophin-3 (163 aa).

The N-terminal stretch at 1–3 is a signal peptide; it reads IQS. Positions 4–119 are excised as a propeptide; the sequence is TSMDQGILTE…VLNRTSRRKR (116 aa). Asn112 carries an N-linked (GlcNAc...) asparagine glycan.

Belongs to the NGF-beta family.

The protein resides in the secreted. Its function is as follows. Seems to promote the survival of visceral and proprioceptive sensory neurons. The polypeptide is Neurotrophin-3 (NTF3) (Eryx colubrinus colubrinus).